A 668-amino-acid chain; its full sequence is DNA ligase (668 aa).

Residues 37 to 41 (DNVYD), 86 to 87 (SM), and Glu-116 each bind NAD(+). The N6-AMP-lysine intermediate role is filled by Lys-118. The NAD(+) site is built by Arg-139, Glu-173, Lys-288, and Lys-312. Cys-406, Cys-409, Cys-424, and Cys-429 together coordinate Zn(2+). Residues 591–668 (IPDNPFKDKT…TEEEAIAQIK (78 aa)) form the BRCT domain.

This sequence belongs to the NAD-dependent DNA ligase family. LigA subfamily. Mg(2+) is required as a cofactor. Mn(2+) serves as cofactor.

The enzyme catalyses NAD(+) + (deoxyribonucleotide)n-3'-hydroxyl + 5'-phospho-(deoxyribonucleotide)m = (deoxyribonucleotide)n+m + AMP + beta-nicotinamide D-nucleotide.. Functionally, DNA ligase that catalyzes the formation of phosphodiester linkages between 5'-phosphoryl and 3'-hydroxyl groups in double-stranded DNA using NAD as a coenzyme and as the energy source for the reaction. It is essential for DNA replication and repair of damaged DNA. This Lactobacillus acidophilus (strain ATCC 700396 / NCK56 / N2 / NCFM) protein is DNA ligase.